A 299-amino-acid chain; its full sequence is Oxygen-dependent coproporphyrinogen-III oxidase (299 aa).

Ser-92 contacts substrate. His-96 and His-106 together coordinate a divalent metal cation. His-106 (proton donor) is an active-site residue. A substrate-binding site is contributed by 108–110; sequence NVR. Residues His-145 and His-175 each contribute to the a divalent metal cation site. The tract at residues 240–275 is important for dimerization; sequence YVEFNLVWDRGTLFGLQTGGRTESILMSMPPLVRWE. 258 to 260 is a substrate binding site; sequence GGR.

It belongs to the aerobic coproporphyrinogen-III oxidase family. Homodimer. It depends on a divalent metal cation as a cofactor.

Its subcellular location is the cytoplasm. It catalyses the reaction coproporphyrinogen III + O2 + 2 H(+) = protoporphyrinogen IX + 2 CO2 + 2 H2O. Its pathway is porphyrin-containing compound metabolism; protoporphyrin-IX biosynthesis; protoporphyrinogen-IX from coproporphyrinogen-III (O2 route): step 1/1. In terms of biological role, involved in the heme biosynthesis. Catalyzes the aerobic oxidative decarboxylation of propionate groups of rings A and B of coproporphyrinogen-III to yield the vinyl groups in protoporphyrinogen-IX. The protein is Oxygen-dependent coproporphyrinogen-III oxidase of Salmonella heidelberg (strain SL476).